Consider the following 854-residue polypeptide: MFYNFLLYLVIHVNYALDALTFNKFLSLDGIVSWPMIIKDRVYFLSDHEGISNLYSVNLEGKDLTKHTNFTEYYCRNASSDGRRIVFQNSGDIYLYDPEKQELKLLDIDLPTDRKKKQGKFVEVLDYTTEAIANDKYLSLISRGKVFLMRHWDGPAVQLGEKQGVRYKQIQLLPNGDTVVLDTNDDKLTFLSKDGSIKKLNVDLGRIERIKVSPDGKKILISNNRLELWLYEVDTTNLRLIDKSEYDVISQMDWHPDNEWFAYTFPESYSTQSIKLAHISGKVIRITSPYGYDFSPSFDPDGRYLYFLSARHLDPTNDKVIFNMSFQRVIKPYLVVLSNTYSPFNQSLEETTSDKKVEIEGIEDRVIPFPVDEDYYIRIEGAKNNKVFLFSLPIKGYRYPGETLGKLEVFDLDSKTKELYADNVKSFSLTIDKGKILILFKDSIRLFDVNTKPDLNATGKKGGIVDLSRIKVYVDPEREWKQMFREAWKLMQQNYWKPDGLKDWESVLLKYEKLIDRISTRYELSDLIQEMQGETKTSHSYEMPYDYDTAEPLPIGGLGADYEYDKENKCYKIARIYVGDPTNENERSPLRDPGVQLNIGDCIKAVDGEEVKYNILSYLVNKDQVVLDVITKGKTKRVTVKLLKDEKFLIYRYWVEKNRQYVHEKSKGKLGYVHIPDMMYQGFAEFYRLFLSEFHREGLIVDVRFNRGGFISGLILEKLLLKRMGYVVRRNGKELPHPFFSSPGVIVAITNQYAGSDGDIFSYLFKKYKLGILIGRRTWGGVIGINVRDRLADNSAVSQPEFAVHFHDIGLKIENYGVDPDIEVDIKPEDYANGRDPQLDTAIELALKQLEEKS.

His-539 serves as the catalytic Charge relay system. Positions 554–646 are PDZ-like; it reads PIGGLGADYE…RVTVKLLKDE (93 aa). Gly-709 provides a ligand contact to substrate. Catalysis depends on Ser-756, which acts as the Nucleophile. The active-site Charge relay system is the Glu-814.

The protein belongs to the peptidase S41B family.

It is found in the cytoplasm. Its function is as follows. Degrades oligopeptides in a sequential manner. This is Putative Tricorn-like protease C-terminal subunit (triC) from Sulfurisphaera tokodaii (strain DSM 16993 / JCM 10545 / NBRC 100140 / 7) (Sulfolobus tokodaii).